The chain runs to 344 residues: Methionine import ATP-binding protein MetN (344 aa).

The region spanning 2 to 241 (IELQGLSQRF…PQHEVTRAMI (240 aa)) is the ABC transporter domain. Residue 38–45 (GRSGAGKS) participates in ATP binding.

Belongs to the ABC transporter superfamily. Methionine importer (TC 3.A.1.24) family. In terms of assembly, the complex is composed of two ATP-binding proteins (MetN), two transmembrane proteins (MetI) and a solute-binding protein (MetQ).

The protein localises to the cell inner membrane. The enzyme catalyses L-methionine(out) + ATP + H2O = L-methionine(in) + ADP + phosphate + H(+). It catalyses the reaction D-methionine(out) + ATP + H2O = D-methionine(in) + ADP + phosphate + H(+). In terms of biological role, part of the ABC transporter complex MetNIQ involved in methionine import. Responsible for energy coupling to the transport system. The polypeptide is Methionine import ATP-binding protein MetN (Cupriavidus pinatubonensis (strain JMP 134 / LMG 1197) (Cupriavidus necator (strain JMP 134))).